The primary structure comprises 127 residues: uncharacterized protein (127 aa).

The signal sequence occupies residues 1–26 (MKAIYALLAVVALALVAVSLFSQSDS).

This is an uncharacterized protein from Archaeoglobus fulgidus (strain ATCC 49558 / DSM 4304 / JCM 9628 / NBRC 100126 / VC-16).